The following is a 320-amino-acid chain: Integrin-binding sialoprotein (320 aa).

The N-terminal stretch at 1-16 (MKTALILLCILGMASA) is a signal peptide. Phosphoserine is present on residues S31, S68, S76, S77, and S96. 3 disordered regions span residues 60 to 117 (PVQG…VTAS), 136 to 225 (LPKK…RELT), and 238 to 264 (FQQT…VEYG). The segment covering 67 to 106 (SSEENGDGDSSEEEGEEEETSNEEENNEDSEGNEDQEAEA) has biased composition (acidic residues). An N-linked (GlcNAc...) asparagine glycan is attached at N108. The segment covering 139–152 (KAGDAEGKAPKMKE) has biased composition (basic and acidic residues). S153 carries the post-translational modification Phosphoserine. The segment covering 153–176 (SDEEEEEEEEEENENEEAEVDENE) has biased composition (acidic residues). Polar residues-rich tracts occupy residues 177–188 (QVVNGTSTNSTE) and 249–261 (GTTS…SSTV). 2 N-linked (GlcNAc...) asparagine glycosylation sites follow: N180 and N185. The Integrin-binding motif motif lies at 289–291 (RGD). A sulfotyrosine mark is found at Y316 and Y317.

Monomer. Interacts with integrins; the interaction promotes cell adhesion.

It is found in the secreted. In terms of biological role, binds tightly to hydroxyapatite. Appears to form an integral part of the mineralized matrix. Probably important to cell-matrix interaction. Promotes adhesion and migration of various cells via the alpha-V/beta-3 integrin receptor (ITGAV:ITGB3). The sequence is that of Integrin-binding sialoprotein (Ibsp) from Rattus norvegicus (Rat).